We begin with the raw amino-acid sequence, 104 residues long: Small ubiquitin-related modifier 3 (104 aa).

Residues Lys-5 and Lys-7 each participate in a glycyl lysine isopeptide (Lys-Gly) (interchain with G-Cter in SUMO2) cross-link. Residue Lys-11 forms a Glycyl lysine isopeptide (Lys-Gly) (interchain with G-Cter in SUMO); alternate linkage. Lys-11 is covalently cross-linked (Glycyl lysine isopeptide (Lys-Gly) (interchain with G-Cter in SUMO2); alternate). In terms of domain architecture, Ubiquitin-like spans 15 to 92 (DHINLKVAGQ…IDVFQQQTGG (78 aa)). Gly-92 is covalently cross-linked (Glycyl lysine isopeptide (Gly-Lys) (interchain with K-? in acceptor proteins)). The propeptide occupies 93 to 104 (SRVASCLLGSGL).

Belongs to the ubiquitin family. SUMO subfamily. As to quaternary structure, interacts with SAE2 and UBE2I. Covalently attached to a number of proteins. Interacts with USP25 (via ts SIM domain); the interaction sumoylates USP25 and inhibits its ubiquitin hydrolyzing activity. Interacts with BMAL1. In terms of processing, polymeric chains can be formed through Lys-11 cross-linking. Cleavage of precursor form by SENP1, SENP2 or SENP5 is necessary for function.

It is found in the cytoplasm. The protein resides in the nucleus. The protein localises to the PML body. In terms of biological role, ubiquitin-like protein which can be covalently attached to target lysines either as a monomer or as a lysine-linked polymer. Does not seem to be involved in protein degradation and may function as an antagonist of ubiquitin in the degradation process. Plays a role in a number of cellular processes such as nuclear transport, DNA replication and repair, mitosis and signal transduction. Covalent attachment to its substrates requires prior activation by the E1 complex SAE1-SAE2 and linkage to the E2 enzyme UBE2I, and can be promoted by an E3 ligase such as PIAS1-4, RANBP2 or CBX4. Plays a role in the regulation of sumoylation status of SETX. The sequence is that of Small ubiquitin-related modifier 3 (SUMO3) from Bos taurus (Bovine).